Reading from the N-terminus, the 422-residue chain is Aliphatic (R)-hydroxynitrile lyase (422 aa).

Residues Cys-63, His-85, Cys-115, Cys-118, Cys-121, Cys-129, and Cys-199 each contribute to the Zn(2+) site.

It belongs to the zinc-containing alcohol dehydrogenase family. In terms of assembly, homodimer. Zn(2+) serves as cofactor.

It catalyses the reaction (2R)-2-hydroxy-2-methylbutanenitrile = butan-2-one + hydrogen cyanide. Involved in the catabolism of cyanogenic glycosides. Naturally occurring substrates are the aliphatic acetone cyanohydrin and butan-2-one cyanohydrin, which are the aglycones of the cyanogenic glycosides linamarin, lotaustralin, linustatin and neolinustatin. Can use various aliphatic ketones and aldehydes as substrates, but not aromatic ketones. The protein is Aliphatic (R)-hydroxynitrile lyase of Linum usitatissimum (Flax).